Reading from the N-terminus, the 118-residue chain is Ig heavy chain V region X24 (118 aa).

The Ig-like domain occupies 1–111 (EVKLLESGGG…GYFDYWGQGT (111 aa)).

The chain is Ig heavy chain V region X24 from Mus musculus (Mouse).